We begin with the raw amino-acid sequence, 392 residues long: Phosphoglycerate kinase (392 aa).

Residues 21–23, arginine 36, 59–62, arginine 113, and arginine 146 each bind substrate; these read DLN and HLGR. ATP contacts are provided by residues lysine 197, glutamate 319, and 345 to 348; that span reads GGDT.

This sequence belongs to the phosphoglycerate kinase family. In terms of assembly, monomer.

Its subcellular location is the cytoplasm. The enzyme catalyses (2R)-3-phosphoglycerate + ATP = (2R)-3-phospho-glyceroyl phosphate + ADP. Its pathway is carbohydrate degradation; glycolysis; pyruvate from D-glyceraldehyde 3-phosphate: step 2/5. The protein is Phosphoglycerate kinase of Nitrosococcus oceani (strain ATCC 19707 / BCRC 17464 / JCM 30415 / NCIMB 11848 / C-107).